Reading from the N-terminus, the 423-residue chain is Glutamate-1-semialdehyde 2,1-aminomutase (423 aa).

Lys262 carries the post-translational modification N6-(pyridoxal phosphate)lysine.

The protein belongs to the class-III pyridoxal-phosphate-dependent aminotransferase family. HemL subfamily. Requires pyridoxal 5'-phosphate as cofactor.

The protein resides in the cytoplasm. The enzyme catalyses (S)-4-amino-5-oxopentanoate = 5-aminolevulinate. It functions in the pathway porphyrin-containing compound metabolism; protoporphyrin-IX biosynthesis; 5-aminolevulinate from L-glutamyl-tRNA(Glu): step 2/2. The polypeptide is Glutamate-1-semialdehyde 2,1-aminomutase (Methanosphaera stadtmanae (strain ATCC 43021 / DSM 3091 / JCM 11832 / MCB-3)).